The chain runs to 299 residues: Oxygen-dependent coproporphyrinogen-III oxidase (299 aa).

Substrate is bound at residue serine 92. Residues histidine 96 and histidine 106 each contribute to the a divalent metal cation site. The Proton donor role is filled by histidine 106. Residue 108 to 110 coordinates substrate; that stretch reads NVR. Residues histidine 145 and histidine 175 each contribute to the a divalent metal cation site. The segment at 240 to 275 is important for dimerization; sequence YVEFNLVWDRGTLFGLQTGGRTESILMSMPPLVRWE. 258 to 260 is a substrate binding site; the sequence is GGR.

It belongs to the aerobic coproporphyrinogen-III oxidase family. In terms of assembly, homodimer. A divalent metal cation serves as cofactor.

It is found in the cytoplasm. The catalysed reaction is coproporphyrinogen III + O2 + 2 H(+) = protoporphyrinogen IX + 2 CO2 + 2 H2O. The protein operates within porphyrin-containing compound metabolism; protoporphyrin-IX biosynthesis; protoporphyrinogen-IX from coproporphyrinogen-III (O2 route): step 1/1. Involved in the heme biosynthesis. Catalyzes the aerobic oxidative decarboxylation of propionate groups of rings A and B of coproporphyrinogen-III to yield the vinyl groups in protoporphyrinogen-IX. The chain is Oxygen-dependent coproporphyrinogen-III oxidase from Salmonella typhi.